Here is a 725-residue protein sequence, read N- to C-terminus: NAD(+) hydrolase SARM1 (725 aa).

The N-terminal 27 residues, 1–27 (MVLTILFSAYKLCRFFAMSSPRPGAER), are a transit peptide targeting the mitochondrion. The ARM 1 repeat unit spans residues 60–100 (EVQGALERALPELQQALSALKQAGGGRAVGAGLAEVFQLVE). NAD(+)-binding positions include W103, R110, 149–158 (EQILVAENRR), and 191–194 (HMFK). ARM repeat units lie at residues 114 to 153 (QGLCDAIRLEGGLDLLLRLLQAPELETRVQAARLLEQILV), 155 to 194 (ENRRDRVARIGLGVILNLAKEREPVELARSVAGILEHMFK), 197 to 236 (EETCQRLVAAGGLDAVLYWCRRTDPALLRHCALALANCAM), 238 to 281 (GGQA…LATN), 282 to 315 (KEVEREVERSGTLALVEPLVASLDPGRFARCLVD), 316 to 355 (ASDTSQGRGPDDLQRLVPLLDSSRMEAQCIGAFYLCAEAV), and 360 to 403 (KNRN…EEVP). 2 consecutive SAM domains span residues 413–477 (WKEA…LKTF) and 483–549 (CDRS…MLHS). Phosphoserine occurs at positions 549 and 559. The region spanning 561–704 (DVPDVFISYR…KIIRFLQGRS (144 aa)) is the TIR domain. Residues 570 to 571 (RR) and E600 each bind NAD(+). E643 is an active-site residue. A disordered region spans residues 705 to 725 (SRDSSAGSDTSLEGAAPMGPT).

It belongs to the SARM1 family. As to quaternary structure, homooctamer; forms an octameric ring via SAM domains. Interacts with TICAM1/TRIF and thereby interferes with TICAM1/TRIF function. Interacts with MAPK10/JNK3 and SDC2 (via cytoplasmic domain). In terms of processing, phosphorylation at Ser-549 by JNK kinases (MAPK8, MAPK9 and /or MAPK10) enhance the NAD(+) hydrolase (NADase) activity. Phosphorylation at Ser-549 and subsequent activation takes place in response to oxidative stress conditions and inhibits mitochondrial respiration. Highest expression seen in the spleen and the brain, followed by lung, kidney, liver and other tissues.

The protein localises to the cytoplasm. Its subcellular location is the cell projection. It is found in the axon. It localises to the dendrite. The protein resides in the synapse. The protein localises to the mitochondrion. It catalyses the reaction NAD(+) + H2O = ADP-D-ribose + nicotinamide + H(+). It carries out the reaction NAD(+) = cyclic ADP-beta-D-ribose + nicotinamide + H(+). The catalysed reaction is NADP(+) + H2O = ADP-D-ribose 2'-phosphate + nicotinamide + H(+). Autoinhibited: in the inactive state, the enzymatic TIR domain is held apart by the autoinhibiting ARM repeats. NAD(+)-binding to ARM repeats maintains an inactive state by promoting interaction between ARM repeats and the TIR domain, thereby facilitating inhibition of the enzymatic TIR domain. Following activation, possibly by nicotinamide mononucleotide (NMN), auto-inhibitory interactions are released, allowing self-association of the TIR domains and subsequent activation of the NAD(+) hydrolase (NADase) activity. Self-association of TIR domains is facilitated by the octamer of SAM domains. In terms of biological role, NAD(+) hydrolase, which plays a key role in axonal degeneration following injury by regulating NAD(+) metabolism. Acts as a negative regulator of MYD88- and TRIF-dependent toll-like receptor signaling pathway by promoting Wallerian degeneration, an injury-induced form of programmed subcellular death which involves degeneration of an axon distal to the injury site. Wallerian degeneration is triggered by NAD(+) depletion: in response to injury, SARM1 is activated and catalyzes cleavage of NAD(+) into ADP-D-ribose (ADPR), cyclic ADPR (cADPR) and nicotinamide; NAD(+) cleavage promoting cytoskeletal degradation and axon destruction. Also able to hydrolyze NADP(+), but not other NAD(+)-related molecules. Can activate neuronal cell death in response to stress. Regulates dendritic arborization through the MAPK4-JNK pathway. Involved in innate immune response: inhibits both TICAM1/TRIF- and MYD88-dependent activation of JUN/AP-1, TRIF-dependent activation of NF-kappa-B and IRF3, and the phosphorylation of MAPK14/p38. This is NAD(+) hydrolase SARM1 from Sus scrofa (Pig).